The following is a 473-amino-acid chain: H(+)/Cl(-) exchange transporter ClcA (473 aa).

The Cytoplasmic portion of the chain corresponds to 1-32; sequence MKTDTSTFLAQQIVRLRRRDQIRRLMQRDKTP. Residues 33-69 traverse the membrane as a helical segment; sequence LAILFMAAVVGTLTGLVGVAFEKTVSWVQNMRIGALV. Topologically, residues 70-76 are periplasmic; sequence QVADHAF. A helical transmembrane segment spans residues 77–100; the sequence is LLWPLAFILSALLAMVGYFLVRKF. A Selectivity filter part_1 motif is present at residues 106–110; sequence GSGIP. A chloride-binding site is contributed by Ser107. Positions 109–116 form an intramembrane region, helical; sequence IPEIEGAL. Over 117–123 the chain is Cytoplasmic; that stretch reads EELRPVR. The next 2 helical transmembrane spans lie at 124–141 and 148–166; these read WWRVLPVKFIGGMGTLGA and EGPTVQIGGNLGRMVLDVF. The Selectivity filter part_2 signature appears at 146–150; the sequence is GREGP. At 167-176 the chain is on the cytoplasmic side; it reads RMRSAEARHT. 2 consecutive intramembrane regions (helical) follow at residues 177 to 189 and 193 to 201; these read LLATGAAAGLSAA and PLAGILFII. Residues 202–214 lie on the Cytoplasmic side of the membrane; sequence EEMRPQFRYNLIS. A helical transmembrane segment spans residues 215 to 232; that stretch reads IKAVFTGVIMSSIVFRIF. At 233–252 the chain is on the periplasmic side; that stretch reads NGEAPIIEVGKLSDAPVNTL. A helical transmembrane segment spans residues 253 to 281; it reads WLYLILGIIFGCVGPVFNSLVLRTQDMFQ. At 282 to 287 the chain is on the cytoplasmic side; sequence RFHGGE. A helical transmembrane segment spans residues 288-309; that stretch reads IKKWVLMGGAIGGLCGILGLIE. Residues 310–329 are Periplasmic-facing; sequence PAAAGGGFNLIPIAAAGNFS. Helical transmembrane passes span 330–349 and 355–376; these read VGLLLFIFITRVVTTLLCFS and GIFAPMLALGTLLGTAFGMAAA. Residues 355 to 359 carry the Selectivity filter part_3 motif; that stretch reads GIFAP. Positions 356 and 357 each coordinate chloride. Over 377–386 the chain is Periplasmic; it reads VLFPQYHLEA. The segment at residues 387–401 is an intramembrane region (helical); sequence GTFAIAGMGALMAAS. Positions 402-404 form an intramembrane region, note=Loop between two helices; the sequence is VRA. Positions 405 to 416 form an intramembrane region, helical; sequence PLTGIVLVLEMT. The note=Loop between two helices intramembrane region spans 417–421; it reads DNYQL. A helical membrane pass occupies residues 422–438; that stretch reads ILPMIITCLGATLLAQF. Topologically, residues 439–473 are cytoplasmic; the sequence is LGGKPLYSTILARTLAKQDAEQAAKNQNAPAGENT. Residue Tyr445 coordinates chloride.

This sequence belongs to the chloride channel (TC 2.A.49) family. ClcA subfamily. Homodimer.

It is found in the cell inner membrane. The catalysed reaction is 2 chloride(in) + H(+)(out) = 2 chloride(out) + H(+)(in). Its function is as follows. Proton-coupled chloride transporter. Functions as antiport system and exchanges two chloride ions for 1 proton. Probably acts as an electrical shunt for an outwardly-directed proton pump that is linked to amino acid decarboxylation, as part of the extreme acid resistance (XAR) response. In Salmonella typhi, this protein is H(+)/Cl(-) exchange transporter ClcA.